Here is a 164-residue protein sequence, read N- to C-terminus: Crossover junction endodeoxyribonuclease RuvC (164 aa).

Residues D7, E67, and D139 contribute to the active site. Mg(2+) is bound by residues D7, E67, and D139.

This sequence belongs to the RuvC family. In terms of assembly, homodimer which binds Holliday junction (HJ) DNA. The HJ becomes 2-fold symmetrical on binding to RuvC with unstacked arms; it has a different conformation from HJ DNA in complex with RuvA. In the full resolvosome a probable DNA-RuvA(4)-RuvB(12)-RuvC(2) complex forms which resolves the HJ. Mg(2+) serves as cofactor.

Its subcellular location is the cytoplasm. It catalyses the reaction Endonucleolytic cleavage at a junction such as a reciprocal single-stranded crossover between two homologous DNA duplexes (Holliday junction).. In terms of biological role, the RuvA-RuvB-RuvC complex processes Holliday junction (HJ) DNA during genetic recombination and DNA repair. Endonuclease that resolves HJ intermediates. Cleaves cruciform DNA by making single-stranded nicks across the HJ at symmetrical positions within the homologous arms, yielding a 5'-phosphate and a 3'-hydroxyl group; requires a central core of homology in the junction. The consensus cleavage sequence is 5'-(A/T)TT(C/G)-3'. Cleavage occurs on the 3'-side of the TT dinucleotide at the point of strand exchange. HJ branch migration catalyzed by RuvA-RuvB allows RuvC to scan DNA until it finds its consensus sequence, where it cleaves and resolves the cruciform DNA. The chain is Crossover junction endodeoxyribonuclease RuvC from Citrifermentans bemidjiense (strain ATCC BAA-1014 / DSM 16622 / JCM 12645 / Bem) (Geobacter bemidjiensis).